We begin with the raw amino-acid sequence, 647 residues long: DNA ligase (647 aa).

NAD(+) is bound by residues 30 to 34 (DEEYD), 79 to 80 (SM), and Glu105. The active-site N6-AMP-lysine intermediate is the Lys107. NAD(+) is bound by residues Arg128, Glu162, and Lys301. Zn(2+) contacts are provided by Cys395, Cys398, Cys411, and Cys416. Residues 570–647 (KSDGVIFGKT…ESAFNELVKE (78 aa)) enclose the BRCT domain.

The protein belongs to the NAD-dependent DNA ligase family. LigA subfamily. It depends on Mg(2+) as a cofactor. The cofactor is Mn(2+).

It catalyses the reaction NAD(+) + (deoxyribonucleotide)n-3'-hydroxyl + 5'-phospho-(deoxyribonucleotide)m = (deoxyribonucleotide)n+m + AMP + beta-nicotinamide D-nucleotide.. Its function is as follows. DNA ligase that catalyzes the formation of phosphodiester linkages between 5'-phosphoryl and 3'-hydroxyl groups in double-stranded DNA using NAD as a coenzyme and as the energy source for the reaction. It is essential for DNA replication and repair of damaged DNA. The protein is DNA ligase of Campylobacter jejuni subsp. jejuni serotype O:23/36 (strain 81-176).